We begin with the raw amino-acid sequence, 359 residues long: RNA 3'-terminal phosphate cyclase (359 aa).

ATP-binding positions include glutamine 100 and 291–294 (HASD). Histidine 317 (tele-AMP-histidine intermediate) is an active-site residue.

This sequence belongs to the RNA 3'-terminal cyclase family. Type 1 subfamily.

The protein localises to the cytoplasm. The enzyme catalyses a 3'-end 3'-phospho-ribonucleotide-RNA + ATP = a 3'-end 2',3'-cyclophospho-ribonucleotide-RNA + AMP + diphosphate. Functionally, catalyzes the conversion of 3'-phosphate to a 2',3'-cyclic phosphodiester at the end of RNA. The mechanism of action of the enzyme occurs in 3 steps: (A) adenylation of the enzyme by ATP; (B) transfer of adenylate to an RNA-N3'P to produce RNA-N3'PP5'A; (C) and attack of the adjacent 2'-hydroxyl on the 3'-phosphorus in the diester linkage to produce the cyclic end product. The biological role of this enzyme is unknown but it is likely to function in some aspects of cellular RNA processing. This Hyperthermus butylicus (strain DSM 5456 / JCM 9403 / PLM1-5) protein is RNA 3'-terminal phosphate cyclase.